The sequence spans 265 residues: Molybdenum-pterin-binding protein MopA (265 aa).

Mop domains follow at residues 126-192 and 198-264; these read RTSN…MLAA and RISA…ILAM.

Belongs to the ModE family.

This is Molybdenum-pterin-binding protein MopA (mopA) from Rhodobacter capsulatus (Rhodopseudomonas capsulata).